The chain runs to 327 residues: DNA-directed RNA polymerase subunit alpha (327 aa).

Residues 1 to 231 form an alpha N-terminal domain (alpha-NTD) region; it reads MIYQMQMPAK…DHIMYFANFS (231 aa). The tract at residues 247–327 is alpha C-terminal domain (alpha-CTD); that stretch reads DEFESMRKLL…GMDITRYQMK (81 aa).

The protein belongs to the RNA polymerase alpha chain family. Homodimer. The RNAP catalytic core consists of 2 alpha, 1 beta, 1 beta' and 1 omega subunit. When a sigma factor is associated with the core the holoenzyme is formed, which can initiate transcription.

The enzyme catalyses RNA(n) + a ribonucleoside 5'-triphosphate = RNA(n+1) + diphosphate. Its function is as follows. DNA-dependent RNA polymerase catalyzes the transcription of DNA into RNA using the four ribonucleoside triphosphates as substrates. This chain is DNA-directed RNA polymerase subunit alpha, found in Chlorobium phaeobacteroides (strain DSM 266 / SMG 266 / 2430).